Here is a 545-residue protein sequence, read N- to C-terminus: High-affinity glucose transporter 1 (545 aa).

Transmembrane regions (helical) follow at residues 29-49, 72-92, 100-120, 125-145, 157-177, 192-212, 291-311, 317-337, and 345-365; these read VFFI…DISS, GFIT…SSFV, LSLL…SSVQ, LIIG…VAPV, GLIG…MFYL, IAWG…FFIP, LTGM…AGYS, VASS…LYFI, and LLIG…GILG. N-linked (GlcNAc...) asparagine glycosylation is found at Asn-376 and Asn-387. The next 2 helical transmembrane spans lie at 395 to 415 and 433 to 453; these read IACC…GIWV and ISTS…PTGF. Asn-455 is a glycosylation site (N-linked (GlcNAc...) asparagine). Residues 460–480 traverse the membrane as a helical segment; sequence TYIIYGVFCFAMATHVYFGFP. The tract at residues 524-545 is disordered; that stretch reads VEHEEDKLMNEDSNSESRENQA.

It belongs to the major facilitator superfamily. Sugar transporter (TC 2.A.1.1) family. In terms of assembly, interacts with the human complement factors FH and C4BP. Also binds human immunodeficiency virus (HIV) protein gp160.

It localises to the cell membrane. In terms of biological role, high-affinity glucose transporter. Acts as a multifunctional complement-evasion molecule that causes down-regulation of complement activation by acquisition of human complement factors FH and C4BP. Also functions as a human immunodeficiency virus (HIV) receptor via binding the viral gp160 protein. Modulates hyphae formation. In Candida albicans (strain SC5314 / ATCC MYA-2876) (Yeast), this protein is High-affinity glucose transporter 1.